The following is a 156-amino-acid chain: 6,7-dimethyl-8-ribityllumazine synthase (156 aa).

Residues phenylalanine 22, 56–58 (AFE), and 80–82 (AVV) each bind 5-amino-6-(D-ribitylamino)uracil. Position 85–86 (85–86 (ET)) interacts with (2S)-2-hydroxy-3-oxobutyl phosphate. The Proton donor role is filled by histidine 88. A 5-amino-6-(D-ribitylamino)uracil-binding site is contributed by phenylalanine 113. Arginine 127 is a (2S)-2-hydroxy-3-oxobutyl phosphate binding site.

Belongs to the DMRL synthase family.

The enzyme catalyses (2S)-2-hydroxy-3-oxobutyl phosphate + 5-amino-6-(D-ribitylamino)uracil = 6,7-dimethyl-8-(1-D-ribityl)lumazine + phosphate + 2 H2O + H(+). Its pathway is cofactor biosynthesis; riboflavin biosynthesis; riboflavin from 2-hydroxy-3-oxobutyl phosphate and 5-amino-6-(D-ribitylamino)uracil: step 1/2. Functionally, catalyzes the formation of 6,7-dimethyl-8-ribityllumazine by condensation of 5-amino-6-(D-ribitylamino)uracil with 3,4-dihydroxy-2-butanone 4-phosphate. This is the penultimate step in the biosynthesis of riboflavin. This is 6,7-dimethyl-8-ribityllumazine synthase from Pediococcus pentosaceus (strain ATCC 25745 / CCUG 21536 / LMG 10740 / 183-1w).